Here is a 135-residue protein sequence, read N- to C-terminus: uncharacterized protein (135 aa).

Positions 1–70 (MKPDWPRRGA…RWRPQGTGTG (70 aa)) are disordered.

This is an uncharacterized protein from Homo sapiens (Human).